Consider the following 549-residue polypeptide: Efflux pump patC (549 aa).

A compositionally biased stretch (polar residues) spans Met-1–Leu-12. Positions Met-1 to Gln-40 are disordered. The next 14 membrane-spanning stretches (helical) occupy residues Leu-50–Val-70, Ala-85–Leu-105, Trp-116–Pro-136, Val-146–Leu-166, Leu-178–Ala-198, Trp-206–Leu-226, Val-252–Trp-272, Leu-282–Leu-302, Ile-321–Ile-341, Leu-360–Lys-380, Val-385–Val-405, Ile-419–Val-439, Leu-460–Leu-482, and Val-526–Trp-546.

Belongs to the major facilitator superfamily. TCR/Tet family.

It localises to the vacuole membrane. It is found in the cell membrane. Functionally, efflux pump; part of the gene cluster that mediates the biosynthesis of patulin, an acetate-derived tetraketide mycotoxin produced by several fungal species that shows antimicrobial properties against several bacteria. May be involved in the secretion of E-ascladiol to be converted to patulin by the secreted patulin synthase patE. In Aspergillus clavatus (strain ATCC 1007 / CBS 513.65 / DSM 816 / NCTC 3887 / NRRL 1 / QM 1276 / 107), this protein is Efflux pump patC.